Here is a 198-residue protein sequence, read N- to C-terminus: Recombination protein RecR (198 aa).

The segment at 57-72 (CSVCGHITENDPCYIC) adopts a C4-type zinc-finger fold. One can recognise a Toprim domain in the interval 80-175 (SVICVVEDDK…KVTRLAQGLS (96 aa)).

Belongs to the RecR family.

In terms of biological role, may play a role in DNA repair. It seems to be involved in an RecBC-independent recombinational process of DNA repair. It may act with RecF and RecO. This chain is Recombination protein RecR, found in Staphylococcus aureus (strain MSSA476).